Here is a 398-residue protein sequence, read N- to C-terminus: Cytochrome b (398 aa).

4 helical membrane passes run 33–53 (FGSLLGLCLVAQIITGLFLAM), 77–98 (WLIRNLHANGASFFFICVYLHI), 113–133 (WNIGVILLLLVMMTAFVGYVL), and 178–198 (FFAFHFLFPFLIAAFTIIHLL). Positions 83 and 97 each coordinate heme b. Heme b-binding residues include His182 and His196. His201 serves as a coordination point for a ubiquinone. 4 helical membrane-spanning segments follow: residues 226–246 (YKDLLGFAILLIALISLSLFA), 288–308 (LGGVLALLASILILMLVPILH), 320–340 (FTQLLFWLLVADVIILTWIGG), and 347–367 (YVVIGQIASFLYFFLFLFLIP).

Belongs to the cytochrome b family. As to quaternary structure, the cytochrome bc1 complex contains 3 respiratory subunits (MT-CYB, CYC1 and UQCRFS1), 2 core proteins (UQCRC1 and UQCRC2) and probably 6 low-molecular weight proteins. Heme b is required as a cofactor.

Its subcellular location is the mitochondrion inner membrane. Component of the ubiquinol-cytochrome c reductase complex (complex III or cytochrome b-c1 complex) that is part of the mitochondrial respiratory chain. The b-c1 complex mediates electron transfer from ubiquinol to cytochrome c. Contributes to the generation of a proton gradient across the mitochondrial membrane that is then used for ATP synthesis. This chain is Cytochrome b (mt-cyb), found in Channa asiatica (Small snakehead).